The sequence spans 84 residues: DNA-directed RNA polymerase subunit Rpo5 (84 aa).

It belongs to the archaeal Rpo5/eukaryotic RPB5 RNA polymerase subunit family. As to quaternary structure, part of the RNA polymerase complex.

It localises to the cytoplasm. The enzyme catalyses RNA(n) + a ribonucleoside 5'-triphosphate = RNA(n+1) + diphosphate. In terms of biological role, DNA-dependent RNA polymerase (RNAP) catalyzes the transcription of DNA into RNA using the four ribonucleoside triphosphates as substrates. In Sulfurisphaera tokodaii (strain DSM 16993 / JCM 10545 / NBRC 100140 / 7) (Sulfolobus tokodaii), this protein is DNA-directed RNA polymerase subunit Rpo5.